The chain runs to 629 residues: Transferrin (629 aa).

A signal peptide spans 1–21; that stretch reads MTIKNVLKLAALLGVLALVQA. 2 consecutive Transferrin-like domains span residues 26–366 and 372–621; these read YRMC…ERDG and MKMC…GLKC. Intrachain disulfides connect C29/C63 and C38/C54. Residue Y111 coordinates Fe(3+). Cystine bridges form between C135–C231, C184–C210, C207–C216, C270–C283, C375–C409, and C385–C403. 4 residues coordinate hydrogencarbonate: T137, R141, V143, and G144. Fe(3+) is bound at residue Y225. Residues D408 and H561 each contribute to the Fe(3+) site.

It belongs to the transferrin family. In terms of assembly, monomer.

Transferrins are iron binding transport proteins which bind Fe(3+) ion in association with the binding of an anion, usually bicarbonate. This transferrin binds only one Fe(3+) ion per protein molecule. Transports iron ions from the hemolymph into the eggs during the vitellogenic stage (oogenesis). This is Transferrin from Sarcophaga peregrina (Flesh fly).